An 886-amino-acid chain; its full sequence is DNA double-strand break repair Rad50 ATPase (886 aa).

ATP is bound by residues R13, 33 to 39, and Q128; that span reads NGAGKSS. Coiled-coil stretches lie at residues 183-360 and 400-433; these read EQIK…LLET and KEIT…LKSA. The Zinc-hook domain maps to 392–489; the sequence is LSKAKEEEKE…RLEKVEKALE (98 aa). 2 residues coordinate Zn(2+): C437 and C440. Coiled-coil stretches lie at residues 489 to 518 and 545 to 713; these read EKQE…DAEK and SSAS…KKVE. An ATP-binding site is contributed by 792-797; it reads FLSGGE.

The protein belongs to the SMC family. RAD50 subfamily. Homodimer. Forms a heterotetramer composed of two Mre11 subunits and two Rad50 subunits. The cofactor is Zn(2+).

In terms of biological role, part of the Rad50/Mre11 complex, which is involved in the early steps of DNA double-strand break (DSB) repair. The complex may facilitate opening of the processed DNA ends to aid in the recruitment of HerA and NurA. Rad50 controls the balance between DNA end bridging and DNA resection via ATP-dependent structural rearrangements of the Rad50/Mre11 complex. In Archaeoglobus fulgidus (strain ATCC 49558 / DSM 4304 / JCM 9628 / NBRC 100126 / VC-16), this protein is DNA double-strand break repair Rad50 ATPase.